The following is a 148-amino-acid chain: Large ribosomal subunit protein bL9 (148 aa).

This sequence belongs to the bacterial ribosomal protein bL9 family.

In terms of biological role, binds to the 23S rRNA. The polypeptide is Large ribosomal subunit protein bL9 (Pseudomonas fluorescens (strain SBW25)).